Consider the following 264-residue polypeptide: Small ribosomal subunit protein uS2 (264 aa).

Residues 222-246 (GRSENKDEQNEQGEQIAPVTNEEKQ) form a disordered region.

This sequence belongs to the universal ribosomal protein uS2 family.

The sequence is that of Small ribosomal subunit protein uS2 from Helicobacter hepaticus (strain ATCC 51449 / 3B1).